The following is a 72-amino-acid chain: MAKEDTLEFPGVVKELLPNATFRVELENGHEIIAHTAGKMRKNRIRVLAGDRVQVEMTPYDLTKGRINYRFK.

In terms of domain architecture, S1-like spans 1–72 (MAKEDTLEFP…TKGRINYRFK (72 aa)).

The protein belongs to the IF-1 family. Component of the 30S ribosomal translation pre-initiation complex which assembles on the 30S ribosome in the order IF-2 and IF-3, IF-1 and N-formylmethionyl-tRNA(fMet); mRNA recruitment can occur at any time during PIC assembly.

It localises to the cytoplasm. Its function is as follows. One of the essential components for the initiation of protein synthesis. Stabilizes the binding of IF-2 and IF-3 on the 30S subunit to which N-formylmethionyl-tRNA(fMet) subsequently binds. Helps modulate mRNA selection, yielding the 30S pre-initiation complex (PIC). Upon addition of the 50S ribosomal subunit IF-1, IF-2 and IF-3 are released leaving the mature 70S translation initiation complex. This is Translation initiation factor IF-1 from Ruegeria sp. (strain TM1040) (Silicibacter sp.).